Here is a 113-residue protein sequence, read N- to C-terminus: Sensorin-A (113 aa).

The first 32 residues, 1-32 (MPSRAATSPLNVQMMVVLCIVCLALQAVAANA), serve as a signal peptide directing secretion. At Phe54 the chain carries Phenylalanine amide. A propeptide spanning residues 58–113 (SSSETYSTNLINLLSRQLVSQEELRAILEKQPILLDEVVKILDRNDDGYITVADLL) is cleaved from the precursor. Residues 87–113 (KQPILLDEVVKILDRNDDGYITVADLL) enclose the EF-hand domain. Ca(2+) contacts are provided by Asp100, Asn102, Asp104, Tyr106, and Asp111.

Seems to be specific to the mechanosensory neurons of the central nervous system.

It is found in the secreted. Functionally, may function as an inhibitory cotransmitter acting in conjunction with the fast excitatory transmitter released by sensory neurons. The peptide selectively inhibits certain postsynaptic cells probably by means of sensorin A release. The sequence is that of Sensorin-A (PSC1) from Aplysia californica (California sea hare).